Consider the following 459-residue polypeptide: Phosphoglucosamine mutase (459 aa).

The active-site Phosphoserine intermediate is Ser-100. Mg(2+) contacts are provided by Ser-100, Asp-256, Asp-258, and Asp-260. A Phosphoserine modification is found at Ser-100.

This sequence belongs to the phosphohexose mutase family. Requires Mg(2+) as cofactor. Activated by phosphorylation.

The enzyme catalyses alpha-D-glucosamine 1-phosphate = D-glucosamine 6-phosphate. Its function is as follows. Catalyzes the conversion of glucosamine-6-phosphate to glucosamine-1-phosphate. The protein is Phosphoglucosamine mutase of Heliobacterium modesticaldum (strain ATCC 51547 / Ice1).